The sequence spans 342 residues: tRNA dimethylallyltransferase (342 aa).

Residue 39–46 (GPTGSGKT) coordinates ATP. A substrate-binding site is contributed by 41–46 (TGSGKT). An interaction with substrate tRNA region spans residues 64–67 (DSMQ).

Belongs to the IPP transferase family. Monomer. It depends on Mg(2+) as a cofactor.

It carries out the reaction adenosine(37) in tRNA + dimethylallyl diphosphate = N(6)-dimethylallyladenosine(37) in tRNA + diphosphate. Catalyzes the transfer of a dimethylallyl group onto the adenine at position 37 in tRNAs that read codons beginning with uridine, leading to the formation of N6-(dimethylallyl)adenosine (i(6)A). This is tRNA dimethylallyltransferase from Chlamydia abortus (strain DSM 27085 / S26/3) (Chlamydophila abortus).